The following is a 556-amino-acid chain: MSDRLDNQRVVRAPRGPEITCKSWLSEAPLRMLMNNLDPEVAEKPEELVVYGGIGRAARNWQCYDQIVAALKRLEDDETLLVQSGKAVGVFKTHRDAPRVLIANSNLVPHWATWETFHALDRAGLMMYGQMTAGSWIYIGSQGIVQGTYETFVEAGRRHYGGSLAGRWILTGGLGGMGGAQPLAATMAGASMLAVECQPSRIEARLRTGYLDRQTADLDQALAWIAEAGAPGAKPVSVGLLGNAAEVFPELVKRGVRPDLVTDQTSAHDPLNGYLPAGWSLERWERGRERAPAEVIAAAKASMATQVRAMLAFHAQGIPTVDYGNNIRQRALEEGVSDAFAFPGFVPAYIRPLFCRGIGPFRWAALSGDPEDIYRTDAKVKELIPDDPHLHTWLDMARERIHFQGLPSRICWVGLGDRHRLGLAFNAMVASGELKAPVVIGRDHLDSGSVASPNRETEAMRDGSDAVSDWPLLNALLNTAGGATWVSLHHGGGVGMGFSQHAGMVIVCDGSEDAARRIGRVLWNDPATGVMRHADAGYDDAIACAREKGLDLPFLG.

NAD(+) contacts are provided by residues 52-53, glutamine 130, 176-178, glutamate 196, arginine 201, 243-244, 264-268, 274-275, and tyrosine 323; these read GG, GMG, NA, QTSAH, and YL. The active site involves cysteine 411. Glycine 493 contributes to the NAD(+) binding site.

This sequence belongs to the urocanase family. NAD(+) is required as a cofactor.

It localises to the cytoplasm. The catalysed reaction is 4-imidazolone-5-propanoate = trans-urocanate + H2O. Its pathway is amino-acid degradation; L-histidine degradation into L-glutamate; N-formimidoyl-L-glutamate from L-histidine: step 2/3. Functionally, catalyzes the conversion of urocanate to 4-imidazolone-5-propionate. This is Urocanate hydratase from Rhodospirillum rubrum (strain ATCC 11170 / ATH 1.1.1 / DSM 467 / LMG 4362 / NCIMB 8255 / S1).